Reading from the N-terminus, the 191-residue chain is NADH-quinone oxidoreductase subunit B 2 (191 aa).

The [4Fe-4S] cluster site is built by C69, C70, C134, and C164.

The protein belongs to the complex I 20 kDa subunit family. In terms of assembly, NDH-1 is composed of 14 different subunits. Subunits NuoB, C, D, E, F, and G constitute the peripheral sector of the complex. It depends on [4Fe-4S] cluster as a cofactor.

Its subcellular location is the cell inner membrane. It carries out the reaction a quinone + NADH + 5 H(+)(in) = a quinol + NAD(+) + 4 H(+)(out). Functionally, NDH-1 shuttles electrons from NADH, via FMN and iron-sulfur (Fe-S) centers, to quinones in the respiratory chain. Couples the redox reaction to proton translocation (for every two electrons transferred, four hydrogen ions are translocated across the cytoplasmic membrane), and thus conserves the redox energy in a proton gradient. The sequence is that of NADH-quinone oxidoreductase subunit B 2 from Gluconacetobacter diazotrophicus (strain ATCC 49037 / DSM 5601 / CCUG 37298 / CIP 103539 / LMG 7603 / PAl5).